The sequence spans 223 residues: Deoxyribose-phosphate aldolase (223 aa).

Catalysis depends on Asp-89, which acts as the Proton donor/acceptor. Residue Lys-152 is the Schiff-base intermediate with acetaldehyde of the active site. Lys-181 functions as the Proton donor/acceptor in the catalytic mechanism.

This sequence belongs to the DeoC/FbaB aldolase family. DeoC type 1 subfamily.

It is found in the cytoplasm. It carries out the reaction 2-deoxy-D-ribose 5-phosphate = D-glyceraldehyde 3-phosphate + acetaldehyde. It functions in the pathway carbohydrate degradation; 2-deoxy-D-ribose 1-phosphate degradation; D-glyceraldehyde 3-phosphate and acetaldehyde from 2-deoxy-alpha-D-ribose 1-phosphate: step 2/2. Its function is as follows. Catalyzes a reversible aldol reaction between acetaldehyde and D-glyceraldehyde 3-phosphate to generate 2-deoxy-D-ribose 5-phosphate. This Bacillus cereus (strain G9842) protein is Deoxyribose-phosphate aldolase.